The primary structure comprises 347 residues: Dihydroorotate dehydrogenase (quinone) (347 aa).

FMN-binding positions include 61–65 and Thr85; that span reads AGLDK. Lys65 contributes to the substrate binding site. Residue 110–114 coordinates substrate; it reads NRMGF. Asn138 and Asn171 together coordinate FMN. Asn171 lines the substrate pocket. The active-site Nucleophile is the Ser174. Residue Asn176 participates in substrate binding. The FMN site is built by Lys216 and Thr244. 245–246 lines the substrate pocket; that stretch reads NT. Residues Gly267, Gly296, and 317-318 contribute to the FMN site; that span reads YT.

Belongs to the dihydroorotate dehydrogenase family. Type 2 subfamily. As to quaternary structure, monomer. Requires FMN as cofactor.

It is found in the cell membrane. It catalyses the reaction (S)-dihydroorotate + a quinone = orotate + a quinol. The protein operates within pyrimidine metabolism; UMP biosynthesis via de novo pathway; orotate from (S)-dihydroorotate (quinone route): step 1/1. Catalyzes the conversion of dihydroorotate to orotate with quinone as electron acceptor. This chain is Dihydroorotate dehydrogenase (quinone), found in Azotobacter vinelandii (strain DJ / ATCC BAA-1303).